Here is a 155-residue protein sequence, read N- to C-terminus: uncharacterized protein (155 aa).

A signal peptide spans 1–21; sequence MFFIVAAGFVIAALIAAIGMA. The interval 35–155 is disordered; sequence GQTKPATTRP…PVYRPPEEMV (121 aa). The segment covering 118 to 128 has biased composition (polar residues); the sequence is ATASNTPQNEA.

This is an uncharacterized protein from Schizosaccharomyces pombe (strain 972 / ATCC 24843) (Fission yeast).